The chain runs to 640 residues: Chaperone protein DnaK (640 aa).

A Phosphothreonine; by autocatalysis modification is found at Thr-196. Residues 547 to 569 are compositionally biased toward basic and acidic residues; sequence GDKIPSDKRPALEGALEKLKDAT. Disordered regions lie at residues 547 to 575 and 595 to 640; these read GDKI…GTTE and LYQA…GNGK. The span at 603–615 shows a compositional bias: polar residues; that stretch reads TNASEPTQNTDGS. The segment covering 625 to 634 has biased composition (acidic residues); it reads GEVENAEFEV.

This sequence belongs to the heat shock protein 70 family.

Its function is as follows. Acts as a chaperone. In Chlorobium phaeobacteroides (strain DSM 266 / SMG 266 / 2430), this protein is Chaperone protein DnaK.